A 207-amino-acid chain; its full sequence is Guanylate kinase (207 aa).

Positions 4–184 (GTLYIVSAPS…ALLDLKTIIR (181 aa)) constitute a Guanylate kinase-like domain. 11 to 18 (APSGAGKS) is an ATP binding site.

Belongs to the guanylate kinase family.

It is found in the cytoplasm. The catalysed reaction is GMP + ATP = GDP + ADP. Functionally, essential for recycling GMP and indirectly, cGMP. This Sodalis glossinidius (strain morsitans) protein is Guanylate kinase.